Consider the following 468-residue polypeptide: 3-isopropylmalate dehydratase large subunit (468 aa).

The [4Fe-4S] cluster site is built by cysteine 349, cysteine 409, and cysteine 412.

This sequence belongs to the aconitase/IPM isomerase family. LeuC type 1 subfamily. Heterodimer of LeuC and LeuD. [4Fe-4S] cluster is required as a cofactor.

It catalyses the reaction (2R,3S)-3-isopropylmalate = (2S)-2-isopropylmalate. Its pathway is amino-acid biosynthesis; L-leucine biosynthesis; L-leucine from 3-methyl-2-oxobutanoate: step 2/4. Functionally, catalyzes the isomerization between 2-isopropylmalate and 3-isopropylmalate, via the formation of 2-isopropylmaleate. The chain is 3-isopropylmalate dehydratase large subunit from Nitrobacter winogradskyi (strain ATCC 25391 / DSM 10237 / CIP 104748 / NCIMB 11846 / Nb-255).